The chain runs to 382 residues: uncharacterized protein (382 aa).

12 helical membrane passes run 14–34 (GLLLLTLAIAVLNTLVPLWLA), 45–65 (MVSSSYFTGNLVGTLLTGYLI), 79–99 (LVFAAGCLGLGLMIGFWSWMA), 102–122 (FVAGVGCAMIWVVVESALMCS), 131–151 (LLAAYMMIYYVGTFLGQLLVS), 157–177 (LMNVLPWVTALILAGILPLLF), 204–224 (LGVNGCIISGIVLGSLYGLMP), 236–256 (NIGFWMAVLVSAGIVGQWPIG), 265–285 (LLVLRVQIFVVILGSIAMLTH), 289–309 (APALFILGAAGFTLYPVAMAW), 325–345 (ALLLSYTIGSLLGPSFTAMLM), and 349–369 (SDNLLFIMIASVSFIYLLMLL).

This sequence belongs to the major facilitator superfamily. YcaD (TC 2.A.1.26) family.

The protein localises to the cell inner membrane. This is an uncharacterized protein from Escherichia fergusonii (strain ATCC 35469 / DSM 13698 / CCUG 18766 / IAM 14443 / JCM 21226 / LMG 7866 / NBRC 102419 / NCTC 12128 / CDC 0568-73).